Here is a 380-residue protein sequence, read N- to C-terminus: Succinyl-diaminopimelate desuccinylase (380 aa).

His-69 serves as a coordination point for Zn(2+). Asp-71 is a catalytic residue. Zn(2+) is bound at residue Asp-102. Glu-135 functions as the Proton acceptor in the catalytic mechanism. Zn(2+) is bound by residues Glu-136, Glu-164, and His-353.

This sequence belongs to the peptidase M20A family. DapE subfamily. As to quaternary structure, homodimer. It depends on Zn(2+) as a cofactor. The cofactor is Co(2+).

It catalyses the reaction N-succinyl-(2S,6S)-2,6-diaminopimelate + H2O = (2S,6S)-2,6-diaminopimelate + succinate. It participates in amino-acid biosynthesis; L-lysine biosynthesis via DAP pathway; LL-2,6-diaminopimelate from (S)-tetrahydrodipicolinate (succinylase route): step 3/3. Functionally, catalyzes the hydrolysis of N-succinyl-L,L-diaminopimelic acid (SDAP), forming succinate and LL-2,6-diaminopimelate (DAP), an intermediate involved in the bacterial biosynthesis of lysine and meso-diaminopimelic acid, an essential component of bacterial cell walls. The protein is Succinyl-diaminopimelate desuccinylase of Cereibacter sphaeroides (strain KD131 / KCTC 12085) (Rhodobacter sphaeroides).